The primary structure comprises 92 residues: Small ribosomal subunit protein uS19c (92 aa).

It belongs to the universal ribosomal protein uS19 family.

It localises to the plastid. The protein localises to the chloroplast. Its function is as follows. Protein S19 forms a complex with S13 that binds strongly to the 16S ribosomal RNA. The polypeptide is Small ribosomal subunit protein uS19c (Draba nemorosa (Woodland whitlowgrass)).